The following is a 571-amino-acid chain: Proline--tRNA ligase (571 aa).

The protein belongs to the class-II aminoacyl-tRNA synthetase family. ProS type 1 subfamily. In terms of assembly, homodimer.

Its subcellular location is the cytoplasm. The catalysed reaction is tRNA(Pro) + L-proline + ATP = L-prolyl-tRNA(Pro) + AMP + diphosphate. In terms of biological role, catalyzes the attachment of proline to tRNA(Pro) in a two-step reaction: proline is first activated by ATP to form Pro-AMP and then transferred to the acceptor end of tRNA(Pro). As ProRS can inadvertently accommodate and process non-cognate amino acids such as alanine and cysteine, to avoid such errors it has two additional distinct editing activities against alanine. One activity is designated as 'pretransfer' editing and involves the tRNA(Pro)-independent hydrolysis of activated Ala-AMP. The other activity is designated 'posttransfer' editing and involves deacylation of mischarged Ala-tRNA(Pro). The misacylated Cys-tRNA(Pro) is not edited by ProRS. The sequence is that of Proline--tRNA ligase from Pseudomonas putida (strain GB-1).